We begin with the raw amino-acid sequence, 610 residues long: Replication protein E1 (610 aa).

The Nuclear localization signal signature appears at 83–85 (KRK). A phosphoserine; by host mark is found at serine 93 and serine 102. The Nuclear export signal motif lies at 101–110 (LSPRLEAVTI). The segment at 148–312 (ESGTLVVETD…MLDHESAASS (165 aa)) is DNA-binding region. The region spanning 411-561 (VNFISFLCAL…LPLKENDEVL (151 aa)) is the SF3 helicase domain. ATP is bound at residue 437 to 444 (GPPDTGKS). Lysine 518 is covalently cross-linked (Glycyl lysine isopeptide (Lys-Gly) (interchain with G-Cter in SUMO)). A disordered region spans residues 591–610 (ESGRSDRAFRCTAGTNTESI).

Belongs to the papillomaviridae E1 protein family. As to quaternary structure, can form hexamers. Interacts with E2 protein; this interaction increases E1 DNA binding specificity. Interacts with host DNA polymerase subunit POLA2. Interacts with host single stranded DNA-binding protein RPA1. Interacts with host TOP1; this interaction stimulates the enzymatic activity of TOP1. Phosphorylated. Post-translationally, sumoylated.

Its subcellular location is the host nucleus. The enzyme catalyses Couples ATP hydrolysis with the unwinding of duplex DNA by translocating in the 3'-5' direction.. It carries out the reaction ATP + H2O = ADP + phosphate + H(+). Functionally, ATP-dependent DNA 3'-5' helicase required for initiation of viral DNA replication. It forms a complex with the viral E2 protein. The E1-E2 complex binds to the replication origin which contains binding sites for both proteins. During the initial step, a dimer of E1 interacts with a dimer of protein E2 leading to a complex that binds the viral origin of replication with high specificity. Then, a second dimer of E1 displaces the E2 dimer in an ATP-dependent manner to form the E1 tetramer. Following this, two E1 monomers are added to each half of the site, which results in the formation of two E1 trimers on the viral ori. Subsequently, two hexamers will be created. The double hexamer acts as a bi-directional helicase machinery and unwinds the viral DNA and then recruits the host DNA polymerase to start replication. This chain is Replication protein E1, found in Human papillomavirus type 60.